A 414-amino-acid polypeptide reads, in one-letter code: Serine/threonine transporter SstT (414 aa).

9 helical membrane passes run 19-39, 55-75, 89-109, 148-168, 189-209, 223-243, 297-317, 323-343, and 363-383; these read IIVGLVLGVVTALISPDLEPV, FVKGLRAVAPILIFVLVIAAI, IVMLYIIGTFGASIVAVLASF, ALATSNFIGILAWAIALGIAL, IVHLVISLAPFGIFGLVAATL, LLLVLLGSMLFMALVVNPFIV, IPLGATINMAGAAITVTVLTL, LGIPVSIPTAILLSVVSAVCA, and LFGISGDVAAQVIAVGFVIGV.

This sequence belongs to the dicarboxylate/amino acid:cation symporter (DAACS) (TC 2.A.23) family.

It is found in the cell inner membrane. The catalysed reaction is L-serine(in) + Na(+)(in) = L-serine(out) + Na(+)(out). It carries out the reaction L-threonine(in) + Na(+)(in) = L-threonine(out) + Na(+)(out). Its function is as follows. Involved in the import of serine and threonine into the cell, with the concomitant import of sodium (symport system). This Actinobacillus succinogenes (strain ATCC 55618 / DSM 22257 / CCUG 43843 / 130Z) protein is Serine/threonine transporter SstT.